A 215-amino-acid polypeptide reads, in one-letter code: Probable transaldolase 1 (215 aa).

Lys83 functions as the Schiff-base intermediate with substrate in the catalytic mechanism.

It belongs to the transaldolase family. Type 3B subfamily.

It is found in the cytoplasm. The catalysed reaction is D-sedoheptulose 7-phosphate + D-glyceraldehyde 3-phosphate = D-erythrose 4-phosphate + beta-D-fructose 6-phosphate. It functions in the pathway carbohydrate degradation; pentose phosphate pathway; D-glyceraldehyde 3-phosphate and beta-D-fructose 6-phosphate from D-ribose 5-phosphate and D-xylulose 5-phosphate (non-oxidative stage): step 2/3. In terms of biological role, transaldolase is important for the balance of metabolites in the pentose-phosphate pathway. The sequence is that of Probable transaldolase 1 from Bacillus cereus (strain ATCC 14579 / DSM 31 / CCUG 7414 / JCM 2152 / NBRC 15305 / NCIMB 9373 / NCTC 2599 / NRRL B-3711).